We begin with the raw amino-acid sequence, 303 residues long: Ornithine carbamoyltransferase (303 aa).

Residues Ser52–Thr55, Gln79, Arg103, and His130–Gln133 contribute to the carbamoyl phosphate site. L-ornithine is bound by residues Asn161, Asp222, and Ser226–Met227. Carbamoyl phosphate contacts are provided by residues Cys262–Leu263 and Lys290.

This sequence belongs to the aspartate/ornithine carbamoyltransferase superfamily. OTCase family.

It is found in the cytoplasm. It carries out the reaction carbamoyl phosphate + L-ornithine = L-citrulline + phosphate + H(+). The protein operates within amino-acid biosynthesis; L-arginine biosynthesis; L-arginine from L-ornithine and carbamoyl phosphate: step 1/3. In terms of biological role, reversibly catalyzes the transfer of the carbamoyl group from carbamoyl phosphate (CP) to the N(epsilon) atom of ornithine (ORN) to produce L-citrulline. The polypeptide is Ornithine carbamoyltransferase (Desulfotalea psychrophila (strain LSv54 / DSM 12343)).